Consider the following 283-residue polypeptide: Shikimate dehydrogenase (NADP(+)) (283 aa).

Shikimate-binding positions include serine 22 to serine 24 and threonine 69. Lysine 73 functions as the Proton acceptor in the catalytic mechanism. Asparagine 93 and aspartate 108 together coordinate shikimate. Residues glycine 133–serine 137 and leucine 222 contribute to the NADP(+) site. Tyrosine 224 contacts shikimate. An NADP(+)-binding site is contributed by glycine 245.

It belongs to the shikimate dehydrogenase family. In terms of assembly, homodimer.

It carries out the reaction shikimate + NADP(+) = 3-dehydroshikimate + NADPH + H(+). Its pathway is metabolic intermediate biosynthesis; chorismate biosynthesis; chorismate from D-erythrose 4-phosphate and phosphoenolpyruvate: step 4/7. Its function is as follows. Involved in the biosynthesis of the chorismate, which leads to the biosynthesis of aromatic amino acids. Catalyzes the reversible NADPH linked reduction of 3-dehydroshikimate (DHSA) to yield shikimate (SA). The sequence is that of Shikimate dehydrogenase (NADP(+)) from Rhodopseudomonas palustris (strain BisB5).